We begin with the raw amino-acid sequence, 707 residues long: Lipase maturation factor 2 (707 aa).

The next 10 helical transmembrane spans lie at 10–30 (LFLQ…YTQI), 78–98 (LELL…LSPL), 102–122 (VIYL…QVFL), 123–143 (YFQW…VAPL), 165–185 (DLPF…SGVV), 227–247 (LSVV…FAPI), 259–279 (VLLQ…LMTL), 310–330 (ALLA…LAYG), 364–384 (LTLP…LSAL), and 399–419 (AVVQ…ISLV). Residues Asn-489 and Asn-616 are each glycosylated (N-linked (GlcNAc...) asparagine). A helical transmembrane segment spans residues 637–657 (ALLWGLLMAVGAVRFVQALLA). The tract at residues 665 to 707 (PLAPVSGEKRRPASQKDSGAASEQATAAPNPCSSSSRTTRRKK) is disordered. Residues 679-691 (QKDSGAASEQATA) show a composition bias toward polar residues.

It belongs to the lipase maturation factor family.

The protein localises to the endoplasmic reticulum membrane. Its function is as follows. Involved in the maturation of specific proteins in the endoplasmic reticulum. May be required for maturation and transport of active lipoprotein lipase (LPL) through the secretory pathway. The protein is Lipase maturation factor 2 (LMF2) of Homo sapiens (Human).